Consider the following 714-residue polypeptide: Fatty acid oxidation complex subunit alpha (714 aa).

Residues 1-190 (MEMASAFTLN…KLGLVDDVVP (190 aa)) are enoyl-CoA hydratase. A 3-hydroxyacyl-CoA dehydrogenase region spans residues 306–714 (APLNSVGILG…FWKTTATDLQ (409 aa)).

The protein in the N-terminal section; belongs to the enoyl-CoA hydratase/isomerase family. It in the central section; belongs to the 3-hydroxyacyl-CoA dehydrogenase family. In terms of assembly, heterotetramer of two alpha chains (FadJ) and two beta chains (FadI).

Its subcellular location is the cytoplasm. It catalyses the reaction a (3S)-3-hydroxyacyl-CoA = a (2E)-enoyl-CoA + H2O. It carries out the reaction a 4-saturated-(3S)-3-hydroxyacyl-CoA = a (3E)-enoyl-CoA + H2O. The enzyme catalyses a (3S)-3-hydroxyacyl-CoA + NAD(+) = a 3-oxoacyl-CoA + NADH + H(+). The catalysed reaction is (3S)-3-hydroxybutanoyl-CoA = (3R)-3-hydroxybutanoyl-CoA. It functions in the pathway lipid metabolism; fatty acid beta-oxidation. In terms of biological role, catalyzes the formation of a hydroxyacyl-CoA by addition of water on enoyl-CoA. Also exhibits 3-hydroxyacyl-CoA epimerase and 3-hydroxyacyl-CoA dehydrogenase activities. In Escherichia coli (strain ATCC 8739 / DSM 1576 / NBRC 3972 / NCIMB 8545 / WDCM 00012 / Crooks), this protein is Fatty acid oxidation complex subunit alpha.